A 422-amino-acid chain; its full sequence is uncharacterized protein (422 aa).

The next 12 membrane-spanning stretches (helical) occupy residues 23 to 43 (IVKI…LIYD), 47 to 67 (AIGT…LAPV), 90 to 110 (AIVL…WFVM), 112 to 132 (LMIV…ALIP), 151 to 171 (AQIV…FISP), 172 to 192 (SYTM…VLFI), 228 to 248 (ILYP…PWEA), 263 to 283 (IVYS…GFVL), 291 to 308 (YGLL…AFFI), 318 to 340 (VFFA…YTII), 352 to 372 (VYAV…VICG), and 381 to 401 (GKVI…ILLF).

This sequence belongs to the major facilitator superfamily.

Its subcellular location is the cell membrane. This is an uncharacterized protein from Bacillus subtilis (strain 168).